Reading from the N-terminus, the 311-residue chain is Malate dehydrogenase (311 aa).

Residues 7–13 (GAAGGIG) and aspartate 34 each bind NAD(+). The substrate site is built by arginine 81 and arginine 87. NAD(+) is bound by residues asparagine 94 and 117–119 (ITN). Substrate is bound by residues asparagine 119 and arginine 153. Histidine 177 (proton acceptor) is an active-site residue. Methionine 227 is a binding site for NAD(+).

Belongs to the LDH/MDH superfamily. MDH type 1 family. As to quaternary structure, homodimer.

The catalysed reaction is (S)-malate + NAD(+) = oxaloacetate + NADH + H(+). Catalyzes the reversible oxidation of malate to oxaloacetate. This chain is Malate dehydrogenase, found in Shewanella loihica (strain ATCC BAA-1088 / PV-4).